A 351-amino-acid polypeptide reads, in one-letter code: Probable aldo-keto reductase 2 (351 aa).

Y67 serves as the catalytic Proton donor. H134 serves as a coordination point for substrate. Residue 213 to 223 (SPLGRGFFSAG) participates in NADP(+) binding. The disordered stretch occupies residues 317–351 (YASTDDVRGDRYPQAMANTTWQNSETPPLSSWKAQ). The span at 332–351 (MANTTWQNSETPPLSSWKAQ) shows a compositional bias: polar residues.

The protein belongs to the aldo/keto reductase family.

The sequence is that of Probable aldo-keto reductase 2 from Oryza sativa subsp. japonica (Rice).